The chain runs to 359 residues: MGDRPAVRISAAITPVQQMLASGTGAVLTSLFVTPLDVVKIRLQAQQTPLFQAIAAESRPWFRVTRPSKWKCFLYCNGLMDHVYVCQNMSSCSNLYKTSTHFSGTLDAFVKITHNEGLRSLWSGLPPTLVMAVPATVIYFTCYDQLRDFLCYSMGYHGDHIPLIAGGLARLGAVSVISPLELVRTKMQSRRLQYSELMVCIRSSVAQDGWLSLWRGWGPTVLRDVPFSALYWFNYELVKAQLCEHYRTPQASFTISFTAGAVSGAIAAVLTLPFDVVKTRRQIQLGEMEALGAVSMKKPSSTWNMMRNIWIDMGYKGLFAGFLPRVIKVAPACAVMISTYEFGKTFFQERNLHQARCGL.

Residues 1 to 18 (MGDRPAVRISAAITPVQQ) lie on the Mitochondrial intermembrane side of the membrane. Solcar repeat units lie at residues 13–149 (ITPV…LRDF), 157–241 (HGDH…VKAQ), and 251–346 (ASFT…GKTF). A helical membrane pass occupies residues 19-39 (MLASGTGAVLTSLFVTPLDVV). Over 40 to 119 (KIRLQAQQTP…VKITHNEGLR (80 aa)) the chain is Mitochondrial matrix. Positions 72, 76, 86, and 92 each coordinate [2Fe-2S] cluster. The helical transmembrane segment at 120–140 (SLWSGLPPTLVMAVPATVIYF) threads the bilayer. The Mitochondrial intermembrane segment spans residues 141-162 (TCYDQLRDFLCYSMGYHGDHIP). Residues 163-183 (LIAGGLARLGAVSVISPLELV) traverse the membrane as a helical segment. Topologically, residues 184–212 (RTKMQSRRLQYSELMVCIRSSVAQDGWLS) are mitochondrial matrix. Residues 213-233 (LWRGWGPTVLRDVPFSALYWF) form a helical membrane-spanning segment. Over 234–253 (NYELVKAQLCEHYRTPQASF) the chain is Mitochondrial intermembrane. Residues 254–274 (TISFTAGAVSGAIAAVLTLPF) traverse the membrane as a helical segment. Residues 275–316 (DVVKTRRQIQLGEMEALGAVSMKKPSSTWNMMRNIWIDMGYK) lie on the Mitochondrial matrix side of the membrane. Residues 317–337 (GLFAGFLPRVIKVAPACAVMI) traverse the membrane as a helical segment. Residues 338–359 (STYEFGKTFFQERNLHQARCGL) are Mitochondrial intermembrane-facing.

The protein belongs to the mitochondrial carrier (TC 2.A.29) family. Cleaved and degraded by AFG3L2; degradation by AFG3L2 is regulated by the ability of SLC25A39 to bind iron-sulfur. In absence of mitochondrial glutathione, SLC25A39 binds iron-sulfur, preventing cleavage and degradation by AFG3L2. The presence of mitochondrial glutathione prevents iron-sulfur-binding to SLC25A39, promoting cleavage and degradation by AFG3L2.

It localises to the mitochondrion inner membrane. The enzyme catalyses glutathione(in) = glutathione(out). Its activity is regulated as follows. The activity of SLC25A39 is regulated by levels of mitochondrial glutathione via its ability to bind [2Fe-2S] iron-sulfur cluster. Upon physiological levels of mitochondrial glutathione, glutathione prevents iron-sulfur-binding to SLC25A39 promoting cleavage and degradation by AFG3L2. Upon depletion of mitochondrial glutathione, SLC25A39 binds iron-sulfur, preventing cleavage and degradation by AFG3L2. Mitochondrial transporter required for glutathione import into mitochondria. Glutathione, which plays key roles in oxidative metabolism, is produced exclusively in the cytosol and is imported in many organelles. Mitochondrial glutathione is required for the activity and stability of proteins containing iron-sulfur clusters, as well as erythropoiesis. Involved in the early steps of heme biosynthesis. The chain is Mitochondrial glutathione transporter SLC25A39 (slc25a39) from Danio rerio (Zebrafish).